A 228-amino-acid chain; its full sequence is Ribose-5-phosphate isomerase A (228 aa).

Substrate-binding positions include 31 to 34 (TGST), 85 to 88 (DGAD), and 97 to 100 (KGGG). The Proton acceptor role is filled by Glu-106. Lys-124 provides a ligand contact to substrate.

This sequence belongs to the ribose 5-phosphate isomerase family. Homodimer.

It catalyses the reaction aldehydo-D-ribose 5-phosphate = D-ribulose 5-phosphate. It participates in carbohydrate degradation; pentose phosphate pathway; D-ribose 5-phosphate from D-ribulose 5-phosphate (non-oxidative stage): step 1/1. Catalyzes the reversible conversion of ribose-5-phosphate to ribulose 5-phosphate. The protein is Ribose-5-phosphate isomerase A of Haloarcula marismortui (strain ATCC 43049 / DSM 3752 / JCM 8966 / VKM B-1809) (Halobacterium marismortui).